The chain runs to 472 residues: ATP synthase subunit beta (472 aa).

Glycine 157–threonine 164 is a binding site for ATP.

Belongs to the ATPase alpha/beta chains family. As to quaternary structure, F-type ATPases have 2 components, CF(1) - the catalytic core - and CF(0) - the membrane proton channel. CF(1) has five subunits: alpha(3), beta(3), gamma(1), delta(1), epsilon(1). CF(0) has three main subunits: a(1), b(2) and c(9-12). The alpha and beta chains form an alternating ring which encloses part of the gamma chain. CF(1) is attached to CF(0) by a central stalk formed by the gamma and epsilon chains, while a peripheral stalk is formed by the delta and b chains.

The protein resides in the cell membrane. The enzyme catalyses ATP + H2O + 4 H(+)(in) = ADP + phosphate + 5 H(+)(out). Its function is as follows. Produces ATP from ADP in the presence of a proton gradient across the membrane. The catalytic sites are hosted primarily by the beta subunits. The polypeptide is ATP synthase subunit beta (Desulforamulus reducens (strain ATCC BAA-1160 / DSM 100696 / MI-1) (Desulfotomaculum reducens)).